Here is a 69-residue protein sequence, read N- to C-terminus: Toxin Tma3 (69 aa).

An LCN-type CS-alpha/beta domain is found at lysine 2–asparagine 66. Intrachain disulfides connect cysteine 14–cysteine 65, cysteine 18–cysteine 41, cysteine 27–cysteine 48, and cysteine 31–cysteine 50.

The protein belongs to the long (4 C-C) scorpion toxin superfamily. Sodium channel inhibitor family. As to expression, expressed by the venom gland.

Its subcellular location is the secreted. Its function is as follows. Inhibits voltage-gated sodium channels (Nav). This toxin shows insect lethality against crickets. In Tityus macrochirus (Scorpion), this protein is Toxin Tma3.